The chain runs to 151 residues: Putative phosphatidylglycerol/phosphatidylinositol transfer protein 3 (151 aa).

The N-terminal stretch at 1–26 is a signal peptide; it reads MKYSQNQIVYVIFFFIILIVVKPIES.

The protein belongs to the NPC2 family. As to quaternary structure, monomer.

Catalyzes the intermembrane transfer of phosphatidylglycerol and phosphatidylinositol. This chain is Putative phosphatidylglycerol/phosphatidylinositol transfer protein 3, found in Dictyostelium discoideum (Social amoeba).